The primary structure comprises 411 residues: Translation initiation factor 2 subunit gamma (411 aa).

The tr-type G domain occupies 9–201 (QPSVNIGMVG…AIEKYIPSPK (193 aa)). Positions 18–25 (GHVDHGKS) are G1. Mg(2+) is bound by residues Asp21, Ser25, Gly46, and Ser48. 21–26 (DHGKST) contacts GTP. A G2 region spans residues 46 to 50 (GISIK). Positions 88-91 (DAPG) are G3. Residues 144–147 (NKID) and 179–181 (SAY) each bind GTP. Positions 144–147 (NKID) are G4. The segment at 179–181 (SAY) is G5.

Belongs to the TRAFAC class translation factor GTPase superfamily. Classic translation factor GTPase family. EIF2G subfamily. Heterotrimer composed of an alpha, a beta and a gamma chain. Requires Mg(2+) as cofactor.

It catalyses the reaction GTP + H2O = GDP + phosphate + H(+). Its function is as follows. eIF-2 functions in the early steps of protein synthesis by forming a ternary complex with GTP and initiator tRNA. This Thermoplasma acidophilum (strain ATCC 25905 / DSM 1728 / JCM 9062 / NBRC 15155 / AMRC-C165) protein is Translation initiation factor 2 subunit gamma.